Consider the following 634-residue polypeptide: Biosynthetic arginine decarboxylase (634 aa).

Lysine 103 carries the N6-(pyridoxal phosphate)lysine modification. 283–293 (FDVGGGLGVDY) is a substrate binding site.

Belongs to the Orn/Lys/Arg decarboxylase class-II family. SpeA subfamily. Mg(2+) serves as cofactor. Pyridoxal 5'-phosphate is required as a cofactor.

It carries out the reaction L-arginine + H(+) = agmatine + CO2. Its pathway is amine and polyamine biosynthesis; agmatine biosynthesis; agmatine from L-arginine: step 1/1. Catalyzes the biosynthesis of agmatine from arginine. This Photorhabdus laumondii subsp. laumondii (strain DSM 15139 / CIP 105565 / TT01) (Photorhabdus luminescens subsp. laumondii) protein is Biosynthetic arginine decarboxylase.